The following is a 382-amino-acid chain: Enoyl-[acyl-carrier-protein] reductase, mitochondrial (382 aa).

The transit peptide at 1–17 (MSSFLSKRFLSFSQRAM) directs the protein to the mitochondrion. The active-site Proton donor is the Tyr-77. NADP(+) contacts are provided by residues Asn-159, 187–190 (TSSV), 210–212 (RDR), 285–288 (YGGM), 310–312 (FWV), and Lys-375.

It belongs to the zinc-containing alcohol dehydrogenase family. Quinone oxidoreductase subfamily. In terms of assembly, homodimer.

It localises to the mitochondrion matrix. It carries out the reaction a 2,3-saturated acyl-[ACP] + NADP(+) = a (2E)-enoyl-[ACP] + NADPH + H(+). Catalyzes the NADPH-dependent reduction of trans-2-enoyl thioesters in mitochondrial fatty acid synthesis (fatty acid synthesis type II). Fatty acid chain elongation in mitochondria uses acyl carrier protein (ACP) as an acyl group carrier, but the enzyme accepts both ACP and CoA thioesters as substrates in vitro. Required for respiration and the maintenance of the mitochondrial compartment. The polypeptide is Enoyl-[acyl-carrier-protein] reductase, mitochondrial (ETR1) (Kluyveromyces lactis (strain ATCC 8585 / CBS 2359 / DSM 70799 / NBRC 1267 / NRRL Y-1140 / WM37) (Yeast)).